A 300-amino-acid polypeptide reads, in one-letter code: D-alanine--D-alanine ligase (300 aa).

The ATP-grasp domain occupies 99 to 293; it reads KKILKYANIN…FAELLNSIVK (195 aa). 126 to 181 contributes to the ATP binding site; it reads IEKIGYPVFVKPNSGGSSVATNLVKDKEGIKEAVELALKYDKEVMIENYTKGEEIT. Mg(2+)-binding residues include aspartate 248, glutamate 260, and asparagine 262.

This sequence belongs to the D-alanine--D-alanine ligase family. It depends on Mg(2+) as a cofactor. Mn(2+) serves as cofactor.

It localises to the cytoplasm. The enzyme catalyses 2 D-alanine + ATP = D-alanyl-D-alanine + ADP + phosphate + H(+). It participates in cell wall biogenesis; peptidoglycan biosynthesis. Functionally, cell wall formation. In Clostridium botulinum (strain Langeland / NCTC 10281 / Type F), this protein is D-alanine--D-alanine ligase.